A 125-amino-acid chain; its full sequence is Small ribosomal subunit protein bS6m (125 aa).

The protein belongs to the bacterial ribosomal protein bS6 family. Component of the mitochondrial small ribosomal subunit (mt-SSU). Mature mammalian 55S mitochondrial ribosomes consist of a small (28S) and a large (39S) subunit. The 28S small subunit contains a 12S ribosomal RNA (12S mt-rRNA) and 30 different proteins. The 39S large subunit contains a 16S rRNA (16S mt-rRNA), a copy of mitochondrial valine transfer RNA (mt-tRNA(Val)), which plays an integral structural role, and 52 different proteins.

It is found in the mitochondrion. In Homo sapiens (Human), this protein is Small ribosomal subunit protein bS6m (MRPS6).